Here is a 220-residue protein sequence, read N- to C-terminus: Thiopurine S-methyltransferase (220 aa).

S-adenosyl-L-methionine is bound by residues Trp-10, Leu-45, Glu-66, and Arg-123.

Belongs to the class I-like SAM-binding methyltransferase superfamily. TPMT family.

The protein localises to the cytoplasm. The catalysed reaction is S-adenosyl-L-methionine + a thiopurine = S-adenosyl-L-homocysteine + a thiopurine S-methylether.. The protein is Thiopurine S-methyltransferase of Nitrosospira multiformis (strain ATCC 25196 / NCIMB 11849 / C 71).